The sequence spans 454 residues: L-cysteine desulfhydrase (454 aa).

The interval 1–25 (MEAGERRNGDSMSHNHRAPKKPRLA) is disordered. Over residues 14–23 (HNHRAPKKPR) the composition is skewed to basic residues. Position 257 is an N6-(pyridoxal phosphate)lysine (Lys-257).

It belongs to the class-V pyridoxal-phosphate-dependent aminotransferase family. It depends on pyridoxal 5'-phosphate as a cofactor. As to expression, highly expressed in stems and cauline leaves, and at lower levels in roots, rosette leaves and flowers.

It catalyses the reaction L-cysteine + H2O = hydrogen sulfide + pyruvate + NH4(+) + H(+). Functionally, catalyzes the production of hydrogen sulfide (H2S) from cysteine. Is mainly responsible for the degradation of cysteine to generate H2S, a regulator of stomatal movement and closure. This Arabidopsis thaliana (Mouse-ear cress) protein is L-cysteine desulfhydrase (LCD).